The following is a 291-amino-acid chain: Sulfotransferase 1A1 (291 aa).

Residue 44-49 (KSGTTW) participates in 3'-phosphoadenylyl sulfate binding. 102-104 (KTH) is a binding site for substrate. Residue H104 is the Proton acceptor of the active site. Residues R126, S134, Y189, 223 to 228 (TSFKKM), and 251 to 255 (FMRKG) each bind 3'-phosphoadenylyl sulfate. The residue at position 134 (S134) is a Phosphoserine.

The protein belongs to the sulfotransferase 1 family. As to quaternary structure, homodimer. Post-translationally, the N-terminus is blocked. Liver, kidney, heart and colon.

Its subcellular location is the cytoplasm. The catalysed reaction is a phenol + 3'-phosphoadenylyl sulfate = an aryl sulfate + adenosine 3',5'-bisphosphate + H(+). It carries out the reaction 17beta-estradiol + 3'-phosphoadenylyl sulfate = 17beta-estradiol 3-sulfate + adenosine 3',5'-bisphosphate + H(+). It catalyses the reaction 4-ethylphenol + 3'-phosphoadenylyl sulfate = 4-ethylphenyl sulfate + adenosine 3',5'-bisphosphate + H(+). The enzyme catalyses 4-nitrophenol + 3'-phosphoadenylyl sulfate = 4-nitrophenyl sulfate + adenosine 3',5'-bisphosphate. The catalysed reaction is dopamine + 3'-phosphoadenylyl sulfate = dopamine 3-O-sulfate + adenosine 3',5'-bisphosphate + H(+). It carries out the reaction dopamine + 3'-phosphoadenylyl sulfate = dopamine 4-O-sulfate + adenosine 3',5'-bisphosphate + H(+). It catalyses the reaction 3,3',5-triiodo-L-thyronine + 3'-phosphoadenylyl sulfate = 3,3',5-triiodo-L-thyronine sulfate + adenosine 3',5'-bisphosphate + H(+). The enzyme catalyses 3,3',5'-triiodo-L-thyronine + 3'-phosphoadenylyl sulfate = 3,3',5'-triiodo-L-thyronine sulfate + adenosine 3',5'-bisphosphate + H(+). The catalysed reaction is 3,3'-diiodo-L-thyronine + 3'-phosphoadenylyl sulfate = 3,3'-diiodo-L-thyronine sulfate + adenosine 3',5'-bisphosphate + H(+). It carries out the reaction L-thyroxine + 3'-phosphoadenylyl sulfate = L-thyroxine sulfate + adenosine 3',5'-bisphosphate + H(+). Functionally, sulfotransferase that utilizes 3'-phospho-5'-adenylyl sulfate (PAPS) as sulfonate donor to catalyze the sulfate conjugation of a wide variety of acceptor molecules bearing a hydroxyl or an amine group. Sulfonation increases the water solubility of most compounds, and therefore their renal excretion, but it can also result in bioactivation to form active metabolites. Displays broad substrate specificity for small phenolic compounds. Plays an important roles in the sulfonation of endogenous molecules such as steroid hormones. Mediates the sulfate conjugation of a variety of xenobiotics, including the drugs acetaminophen and minoxidil. Mediates also the metabolic activation of carcinogenic N-hydroxyarylamines leading to highly reactive intermediates capable of forming DNA adducts, potentially resulting in mutagenesis. May play a role in gut microbiota-host metabolic interaction. O-sulfonates 4-ethylphenol (4-EP), a dietary tyrosine-derived metabolite produced by gut bacteria. The product 4-EPS crosses the blood-brain barrier and may negatively regulate oligodendrocyte maturation and myelination, affecting the functional connectivity of different brain regions associated with the limbic system. Catalyzes the sulfate conjugation of dopamine. Catalyzes the sulfation of T4 (L-thyroxine/3,5,3',5'-tetraiodothyronine), T3 (3,5,3'-triiodothyronine), rT3 (3,3',5'-triiodothyronine) and 3,3'-T2 (3,3'-diiodothyronine), with a substrate preference of 3,3'-T2 &gt; rT3 &gt; T3 &gt; T4. This chain is Sulfotransferase 1A1 (Sult1a1), found in Rattus norvegicus (Rat).